A 609-amino-acid polypeptide reads, in one-letter code: Protein FRIGIDA (609 aa).

Residues 1 to 18 (MSNYPPTVAAQPTTTANP) are compositionally biased toward low complexity. The disordered stretch occupies residues 1–31 (MSNYPPTVAAQPTTTANPLLQRHQSEQRRRE). 2 coiled-coil regions span residues 60–97 (DELAAFSVAVETFKRQFDDLQKHIESIENAIDSKLESN) and 409–440 (QIKEQIVSLEKDTLQLDKEMEEKARSLSLMEE). Disordered regions lie at residues 454–488 (RPRLSPMEMPPVTSSSYSPIYRDRSFPSQRDDDQD) and 587–609 (SEERYLGLSNQRSPRSNSSLDPK). Positions 474–484 (YRDRSFPSQRD) are enriched in basic and acidic residues. Over residues 594 to 609 (LSNQRSPRSNSSLDPK) the composition is skewed to polar residues.

It belongs to the Frigida family. In terms of assembly, homodimer. Component of the transcription activator complex FRI-C composed of FRI, FRL1, SUF4, FLX and FES1. Interacts (via N-terminus) with FRL1 and (via C-terminus) with FLX (via N-terminus), SUF4 (via C-terminus) and FES1 (via C-terminus). Interacts with ASHH2 and RIN1, a component of the SWR1 chromatin-remodeling complex. Interacts with CBP20, FIP1 and FIP2. Expressed in ovules, but not in stamens.

It is found in the nucleus speckle. Functionally, required for the regulation of flowering time in the late-flowering phenotype. Involved in the enrichment of a WDR5A-containing COMPASS-like complex at the 'FLOWERING LOCUS C' that trimethylates histone H3 'Lys-4', leading to FLC up-regulation and RNA levels increase. Variants with an early-flowering phenotype (Including cv. Columbia, cv. Landsberg Erecta and cv. Wassilewskija) show loss-of-function mutations of FRI. Able to delay flowering independently of FRL1 activity. Dispensable for the reactivation of FLC in early embryogenesis, but required to maintain high levels of FLC expression in later embryonic and vegetative development. Suppresses the repression of FLC by the autonomous pathway, but has no effect on the expression of the genes involved in this pathway. The protein is Protein FRIGIDA of Arabidopsis thaliana (Mouse-ear cress).